A 183-amino-acid chain; its full sequence is MTDQTYCDRLVQDTPFLTGQGRLSEQQVDRIILQLNRYYPQILTNKEAEKFRNPKASLRVRLCDLLSHLQQRGERHCQEFYRALYIHAQPLHSHLPSRYSPQNSDCRELDWGIESRELSDRGPMSFLAGLGLAAGLALLLYCCPPDPKVLPGTRRVLAFSPVIIDRHVSRYLLAFLADDLGGL.

A disulfide bridge links Cys-7 with Cys-77. The region spanning 8 to 99 is the CARD domain; that stretch reads DRLVQDTPFL…PLHSHLPSRY (92 aa). The chain crosses the membrane as a helical span at residues 122-142; that stretch reads GPMSFLAGLGLAAGLALLLYC.

Associates with BCL10 by CARD-CARD interaction.

Its subcellular location is the endoplasmic reticulum membrane. The protein resides in the mitochondrion membrane. Its function is as follows. Plays a role in inhibiting the effects of BCL10-induced activation of NF-kappa-B. The sequence is that of Caspase recruitment domain-containing protein 19 from Mus musculus (Mouse).